Consider the following 202-residue polypeptide: Phospholipase A2 inhibitor gamma subunit A (202 aa).

Positions 1–19 are cleaved as a signal peptide; sequence MKSLQIICLLFIFVARGSC. 8 disulfides stabilise this stretch: cysteine 22–cysteine 47, cysteine 25–cysteine 32, cysteine 40–cysteine 68, cysteine 74–cysteine 95, cysteine 96–cysteine 101, cysteine 119–cysteine 144, cysteine 137–cysteine 166, and cysteine 170–cysteine 192. An N-linked (GlcNAc...) asparagine glycan is attached at asparagine 177.

Belongs to the CNF-like-inhibitor family. Heterodimer of subunit A and subunit B. N-glycosylated. Expressed by the liver. Not expressed in esophagus, stomach, pancreas, spleen, gall bladder, small intestine, rectum, kidney, trachea, lung, testis and body fat.

It localises to the secreted. Its function is as follows. Inhibits the enzymatic activity of all phospholipase A2 (PA2) groups. This chain is Phospholipase A2 inhibitor gamma subunit A, found in Elaphe quadrivirgata (Japanese four-lined ratsnake).